Reading from the N-terminus, the 465-residue chain is Ribulose bisphosphate carboxylase large chain (465 aa).

Lys4 is subject to N6,N6,N6-trimethyllysine. Asn113 and Thr163 together coordinate substrate. Lys165 functions as the Proton acceptor in the catalytic mechanism. Residue Lys167 participates in substrate binding. Residues Lys191, Asp193, and Glu194 each coordinate Mg(2+). Lys191 bears the N6-carboxylysine mark. Catalysis depends on His284, which acts as the Proton acceptor. Residues Arg285, His317, and Ser369 each coordinate substrate.

Belongs to the RuBisCO large chain family. Type I subfamily. Heterohexadecamer of 8 large chains and 8 small chains; disulfide-linked. The disulfide link is formed within the large subunit homodimers. It depends on Mg(2+) as a cofactor. In terms of processing, the disulfide bond which can form in the large chain dimeric partners within the hexadecamer appears to be associated with oxidative stress and protein turnover.

The protein resides in the plastid. The protein localises to the chloroplast. The catalysed reaction is 2 (2R)-3-phosphoglycerate + 2 H(+) = D-ribulose 1,5-bisphosphate + CO2 + H2O. It catalyses the reaction D-ribulose 1,5-bisphosphate + O2 = 2-phosphoglycolate + (2R)-3-phosphoglycerate + 2 H(+). Functionally, ruBisCO catalyzes two reactions: the carboxylation of D-ribulose 1,5-bisphosphate, the primary event in carbon dioxide fixation, as well as the oxidative fragmentation of the pentose substrate in the photorespiration process. Both reactions occur simultaneously and in competition at the same active site. The sequence is that of Ribulose bisphosphate carboxylase large chain from Byrsonima crassifolia (Cajuil cimarron).